A 232-amino-acid chain; its full sequence is Large ribosomal subunit protein uL1 (232 aa).

This sequence belongs to the universal ribosomal protein uL1 family. As to quaternary structure, part of the 50S ribosomal subunit.

Its function is as follows. Binds directly to 23S rRNA. The L1 stalk is quite mobile in the ribosome, and is involved in E site tRNA release. Functionally, protein L1 is also a translational repressor protein, it controls the translation of the L11 operon by binding to its mRNA. The chain is Large ribosomal subunit protein uL1 from Sinorhizobium fredii (strain NBRC 101917 / NGR234).